A 144-amino-acid chain; its full sequence is Small ribosomal subunit protein uS19 (144 aa).

This sequence belongs to the universal ribosomal protein uS19 family.

Its function is as follows. Protein S19 forms a complex with S13 that binds strongly to the 16S ribosomal RNA. This is Small ribosomal subunit protein uS19 (rps19) from Aeropyrum pernix (strain ATCC 700893 / DSM 11879 / JCM 9820 / NBRC 100138 / K1).